The chain runs to 316 residues: Olfactory receptor 52A5 (316 aa).

Over 1-27 the chain is Extracellular; it reads MPTFNGSVFMPSAFILIGIPGLESVQC. Asparagine 5 carries N-linked (GlcNAc...) asparagine glycosylation. Residues 28–48 form a helical membrane-spanning segment; sequence WIGIPFSAMYLIGVIGNSLIL. The Cytoplasmic portion of the chain corresponds to 49-56; the sequence is VIIKYENS. Residues 57–77 form a helical membrane-spanning segment; sequence LHIPMYIFLAMLAATDIALNT. At 78-101 the chain is on the extracellular side; that stretch reads CILPKMLGIFWFHLPEISFDACLF. Residues 102–122 traverse the membrane as a helical segment; it reads QMWLIHSFQAIESGILLAMAL. The Cytoplasmic segment spans residues 123–141; it reads DRYVAICIPLRHATIFSQQ. A helical membrane pass occupies residues 142–162; that stretch reads FLTHIGLGVTLRAAILIIPSL. At 163–199 the chain is on the extracellular side; sequence GLIKCCLKHYRTTVISHSYCEHMAIVKLATEDIRVNK. A helical transmembrane segment spans residues 200-220; it reads IYGLFVAFAILGFDIIFITLS. The Cytoplasmic segment spans residues 221–240; it reads YVQIFITVFQLPQKEARFKA. The helical transmembrane segment at 241–261 threads the bilayer; the sequence is FNTCIAHICVFLQFYLLAFFS. Topologically, residues 262 to 276 are extracellular; sequence FFTHRFGSHIPPYIH. The chain crosses the membrane as a helical span at residues 277-297; it reads ILLSNLYLLVPPFLNPIVYGV. The Cytoplasmic portion of the chain corresponds to 298–316; it reads KTKQIRDHIVKVFFFKKVT.

It belongs to the G-protein coupled receptor 1 family.

It is found in the cell membrane. Functionally, odorant receptor. The chain is Olfactory receptor 52A5 (OR52A5) from Homo sapiens (Human).